Reading from the N-terminus, the 205-residue chain is High frequency lysogenization protein HflD homolog (205 aa).

Belongs to the HflD family.

It localises to the cytoplasm. The protein localises to the cell inner membrane. The polypeptide is High frequency lysogenization protein HflD homolog (Shewanella baltica (strain OS155 / ATCC BAA-1091)).